A 576-amino-acid polypeptide reads, in one-letter code: Apolipoprotein N-acyltransferase 1 (576 aa).

Transmembrane regions (helical) follow at residues 15–35 (LILCFGIGIGTVFGLSPFSFF), 38–58 (GVFASISCIFLFFSLNRTSIW), 60–80 (AFLWLLILSQILNFTAFYWIP), 92–112 (FVSILFFFLYGLISHLKFFLF), 128–148 (YILLIFPAAGTLSDMITFQIF), 168–188 (ICGVYGLSFLLLFISSTFLIL), and 204–224 (IASLICIAFIYRFGLYRIGYI). Residues 236-538 (LSVLMIQPDT…TGTRAFSIRL (303 aa)) form the CN hydrolase domain. E285 (proton acceptor) is an active-site residue. K355 is an active-site residue. The Nucleophile role is filled by C446. Residues 549–569 (FGNSFLWIFCILILISRLIFV) form a helical membrane-spanning segment.

This sequence belongs to the CN hydrolase family. Apolipoprotein N-acyltransferase subfamily.

The protein resides in the cell inner membrane. It catalyses the reaction N-terminal S-1,2-diacyl-sn-glyceryl-L-cysteinyl-[lipoprotein] + a glycerophospholipid = N-acyl-S-1,2-diacyl-sn-glyceryl-L-cysteinyl-[lipoprotein] + a 2-acyl-sn-glycero-3-phospholipid + H(+). The protein operates within protein modification; lipoprotein biosynthesis (N-acyl transfer). Its function is as follows. Catalyzes the phospholipid dependent N-acylation of the N-terminal cysteine of apolipoprotein, the last step in lipoprotein maturation. This Leptospira interrogans serogroup Icterohaemorrhagiae serovar copenhageni (strain Fiocruz L1-130) protein is Apolipoprotein N-acyltransferase 1.